Consider the following 345-residue polypeptide: tRNA pseudouridine synthase B (345 aa).

Aspartate 39 (nucleophile) is an active-site residue.

It belongs to the pseudouridine synthase TruB family. Type 1 subfamily.

The enzyme catalyses uridine(55) in tRNA = pseudouridine(55) in tRNA. In terms of biological role, responsible for synthesis of pseudouridine from uracil-55 in the psi GC loop of transfer RNAs. This is tRNA pseudouridine synthase B from Rickettsia africae (strain ESF-5).